The chain runs to 1164 residues: IgA FC receptor (1164 aa).

Residues methionine 1–alanine 37 form the signal peptide. 2 disordered regions span residues lysine 54–threonine 75 and histidine 167–aspartate 220. Positions methionine 59–leucine 73 are enriched in polar residues. Composition is skewed to basic and acidic residues over residues histidine 167–alanine 176 and lysine 183–aspartate 220. IgA-binding regions lie at residues asparagine 199 to leucine 438 and threonine 439 to threonine 826. The Ig-like domain occupies glutamine 434 to glutamine 534. A compositionally biased stretch (basic and acidic residues) spans lysine 536–aspartate 564. 2 disordered regions span residues lysine 536 to glutamine 567 and glutamate 823 to leucine 947. Pro residues predominate over residues proline 911–proline 920. Positions leucine 1132–glycine 1136 match the LPXTG sorting signal motif. At threonine 1135 the chain carries Pentaglycyl murein peptidoglycan amidated threonine. A propeptide spans glycine 1136–serine 1164 (removed by sortase).

It localises to the secreted. The protein resides in the cell wall. This is IgA FC receptor (bag) from Streptococcus agalactiae.